Consider the following 63-residue polypeptide: Small integral membrane protein 43 (63 aa).

Important for interaction with SLC2A1 and SLC2A3 regions lie at residues 7–29 (LLLYLALFFFLLFLLFLLLFVVI) and 51–57 (HREPWGF). Residues 9-29 (LYLALFFFLLFLLFLLLFVVI) traverse the membrane as a helical segment.

As to quaternary structure, interacts with glucose transporters SLC2A1/GLUT1 and SLC2A3/GLUT3; the interactions may promote SLC2A1- and SLC2A3-mediated glucose transport to meet the energy needs of mesendoderm differentiation. In terms of tissue distribution, accumulates in the posterior primitive streak of mid-gastrulation embryos at 7.0 dpc. In the adult, highly abundant and enriched in the brain compared to other organs.

Its subcellular location is the cell membrane. Required for mesendoderm differentiation. Interacts with glucose transporters and promotes glucose uptake. Probably augments the glucose uptake capacity of glucose transporter proteins to meet the energy needs of mesendoderm differentiation. The protein is Small integral membrane protein 43 of Mus musculus (Mouse).